A 253-amino-acid polypeptide reads, in one-letter code: Acetylglutamate kinase (253 aa).

Substrate contacts are provided by residues 40 to 41 (GG), arginine 62, and asparagine 154.

Belongs to the acetylglutamate kinase family. ArgB subfamily.

The protein localises to the cytoplasm. The catalysed reaction is N-acetyl-L-glutamate + ATP = N-acetyl-L-glutamyl 5-phosphate + ADP. It functions in the pathway amino-acid biosynthesis; L-arginine biosynthesis; N(2)-acetyl-L-ornithine from L-glutamate: step 2/4. Functionally, catalyzes the ATP-dependent phosphorylation of N-acetyl-L-glutamate. In Staphylococcus saprophyticus subsp. saprophyticus (strain ATCC 15305 / DSM 20229 / NCIMB 8711 / NCTC 7292 / S-41), this protein is Acetylglutamate kinase.